Here is a 668-residue protein sequence, read N- to C-terminus: MTLYDENNLHIIKDNLRYLKLLSKQYPSISSASSEIINLQAILNLPKGTEHFISDVHGEYESFTHMLKNASGVIKRKIDDVFGTSLRECDKKNLATLIYYPEQKLDLIKKSEKNLEDWYKITLYRLIRLCQIVSSKYTRSKVRKSLPSDFAYIIEELLNEQGDRVDKQEYYNSIIETIIDIDRASEFIIAISNVIQRLVVDKLHIIGDIYDRGPGAEIIIEALSKHHSIDIQWGNHDIVWMGAAAGCEACIANVIRISLRYANLSTLEDGYGINLLPLATFAMDFYKEDNCENFKPRTIDKNLNETDIKLLSKMHKAISIIQFKLEGKIIKRRPEFKMEERLLLDKINIKEGTLSLNEKIYKLIDTNFPTLDKENPYELNERERDLVEKLTNSFINSEKLQRHIKFLYSNGSLYLKYNSNLLYHGCIPLNEDGSLKEVTLCKETLKGKSLLDKLDRLAREAYFFKKDPESKLYGMDMMWYLWCGSNSPLFGKKKMTTFERYFLDDKNTHKEEKNPYYKYRNDEKMCTMIFEEFELDADNSHIINGHIPVKTKEGENPIKANGKLLVIDGGFCKAYQPQTGIAGYTLIYNSYGLLLTSHEPFSSIHKAIVEGNDILSSTTILEHVSSRKRVLDTDSGEEIKKQIHDLEMLLVAYRKGLIKEENEANIRF.

This sequence belongs to the FBPase class 3 family. The cofactor is Mn(2+).

The enzyme catalyses beta-D-fructose 1,6-bisphosphate + H2O = beta-D-fructose 6-phosphate + phosphate. It participates in carbohydrate biosynthesis; gluconeogenesis. The protein is Fructose-1,6-bisphosphatase class 3 of Clostridium botulinum (strain Langeland / NCTC 10281 / Type F).